A 311-amino-acid polypeptide reads, in one-letter code: DNA repair and recombination protein RadA (311 aa).

An ATP-binding site is contributed by 104–111 (GEFGSGKS).

It belongs to the eukaryotic RecA-like protein family.

In terms of biological role, involved in DNA repair and in homologous recombination. Binds and assemble on single-stranded DNA to form a nucleoprotein filament. Hydrolyzes ATP in a ssDNA-dependent manner and promotes DNA strand exchange between homologous DNA molecules. This chain is DNA repair and recombination protein RadA, found in Methanobrevibacter smithii (strain ATCC 35061 / DSM 861 / OCM 144 / PS).